The sequence spans 170 residues: MDIVPISPYERMRPLRESKELRIKSFDDHRWPHKNNPVMTKNMIENYFYYIGINDKIQCVHCGGVISGFLEEDTHRISYEHRRHFPKCPVGKYRHPGYHLDAERLKSFKNWRYENIVRKMDLVAAGLFYTGIEDRCACHQCGNELYEWEAGDNPKEEHKRLFPDCKLSSY.

BIR repeat units follow at residues 22–92 (RIKS…PVGK) and 104–169 (RLKS…KLSS).

May act as an apoptosis inhibitor. The chain is Putative apoptosis inhibitor ORF87 from Ostreid herpesvirus 1 (isolate France) (OsHV-1).